The following is a 112-amino-acid chain: UPF0102 protein JJD26997_0163 (112 aa).

The protein belongs to the UPF0102 family.

In Campylobacter jejuni subsp. doylei (strain ATCC BAA-1458 / RM4099 / 269.97), this protein is UPF0102 protein JJD26997_0163.